The primary structure comprises 521 residues: MTNIHNDKILILDFGAQYTQLIARRIRELGVYCEIWAWDHNPAEIAGFGAKGIILSGGPESTTLPGAPAAPQEVFDSGLPIFGICYGMQTLAAQLGGATEAADQREFGHAEVNVINPDALFKGLSDHGGEPKLNVWMSHGDHVSVAPPGFTITATTDRIPVAAMANEEKRWYGVQFHPEVTHTLQGQALLRRFVVDVCGCQTLWTAANIIDDQITRVREQVGDDEVILGLSGGVDSSVVAALLHKAIGEKLTCVFVDTGLLRWQEGDQVMAMFAEHMGVKVVRVNAADRYFAALEGVSDPEAKRKIIGNLFVEIFDEESNKLKNAKWLAQGTIYPDVIESAGSKTGKAHVIKSHHNVGGLPEHMKLGLVEPLRELFKDEVRRLGVELGLPRTMVYRHPFPGPGLGVRILGEVKREYAELLAKADAIFIDELRKADLYDKTSQAFAVFLPVKSVGVVGDARAYEWVIALRAVETIDFMTAHWAHLPYEFLGTVSNRIINELRGVSRVVYDISGKPPATIEWE.

The region spanning 8 to 203 (KILILDFGAQ…VVDVCGCQTL (196 aa)) is the Glutamine amidotransferase type-1 domain. Cys-85 serves as the catalytic Nucleophile. Active-site residues include His-177 and Glu-179. A GMPS ATP-PPase domain is found at 204 to 396 (WTAANIIDDQ…LGLPRTMVYR (193 aa)). 231-237 (SGGVDSS) is a binding site for ATP.

Homodimer.

The enzyme catalyses XMP + L-glutamine + ATP + H2O = GMP + L-glutamate + AMP + diphosphate + 2 H(+). It functions in the pathway purine metabolism; GMP biosynthesis; GMP from XMP (L-Gln route): step 1/1. Catalyzes the synthesis of GMP from XMP. This Stenotrophomonas maltophilia (strain R551-3) protein is GMP synthase [glutamine-hydrolyzing].